Reading from the N-terminus, the 343-residue chain is Holliday junction branch migration complex subunit RuvB (343 aa).

The interval 4–193 (TDNLTAAQPQ…FGIVSRLEFY (190 aa)) is large ATPase domain (RuvB-L). ATP-binding positions include Leu-32, Arg-33, Gly-74, Lys-77, Thr-78, Thr-79, 140 to 142 (EDY), Arg-183, Tyr-193, and Arg-230. Thr-78 contributes to the Mg(2+) binding site. Residues 194 to 264 (ENRDLTTIVS…IADAALSMLD (71 aa)) are small ATPAse domain (RuvB-S). The tract at residues 267 to 343 (AQGLDVMDRK…YLHFGLPVEK (77 aa)) is head domain (RuvB-H). Residues Arg-322 and Arg-327 each coordinate DNA.

This sequence belongs to the RuvB family. In terms of assembly, homohexamer. Forms an RuvA(8)-RuvB(12)-Holliday junction (HJ) complex. HJ DNA is sandwiched between 2 RuvA tetramers; dsDNA enters through RuvA and exits via RuvB. An RuvB hexamer assembles on each DNA strand where it exits the tetramer. Each RuvB hexamer is contacted by two RuvA subunits (via domain III) on 2 adjacent RuvB subunits; this complex drives branch migration. In the full resolvosome a probable DNA-RuvA(4)-RuvB(12)-RuvC(2) complex forms which resolves the HJ.

The protein resides in the cytoplasm. It carries out the reaction ATP + H2O = ADP + phosphate + H(+). In terms of biological role, the RuvA-RuvB-RuvC complex processes Holliday junction (HJ) DNA during genetic recombination and DNA repair, while the RuvA-RuvB complex plays an important role in the rescue of blocked DNA replication forks via replication fork reversal (RFR). RuvA specifically binds to HJ cruciform DNA, conferring on it an open structure. The RuvB hexamer acts as an ATP-dependent pump, pulling dsDNA into and through the RuvAB complex. RuvB forms 2 homohexamers on either side of HJ DNA bound by 1 or 2 RuvA tetramers; 4 subunits per hexamer contact DNA at a time. Coordinated motions by a converter formed by DNA-disengaged RuvB subunits stimulates ATP hydrolysis and nucleotide exchange. Immobilization of the converter enables RuvB to convert the ATP-contained energy into a lever motion, pulling 2 nucleotides of DNA out of the RuvA tetramer per ATP hydrolyzed, thus driving DNA branch migration. The RuvB motors rotate together with the DNA substrate, which together with the progressing nucleotide cycle form the mechanistic basis for DNA recombination by continuous HJ branch migration. Branch migration allows RuvC to scan DNA until it finds its consensus sequence, where it cleaves and resolves cruciform DNA. The sequence is that of Holliday junction branch migration complex subunit RuvB from Neisseria meningitidis serogroup C (strain 053442).